The sequence spans 237 residues: Ribosomal RNA small subunit methyltransferase G (237 aa).

S-adenosyl-L-methionine is bound by residues Gly-78, Phe-83, Ala-129 to Glu-130, and Arg-148.

It belongs to the methyltransferase superfamily. RNA methyltransferase RsmG family.

It is found in the cytoplasm. Its function is as follows. Specifically methylates the N7 position of a guanine in 16S rRNA. This chain is Ribosomal RNA small subunit methyltransferase G, found in Streptococcus pyogenes serotype M1.